The primary structure comprises 305 residues: Glycine--tRNA ligase alpha subunit (305 aa).

Belongs to the class-II aminoacyl-tRNA synthetase family. Tetramer of two alpha and two beta subunits.

Its subcellular location is the cytoplasm. It catalyses the reaction tRNA(Gly) + glycine + ATP = glycyl-tRNA(Gly) + AMP + diphosphate. In Streptococcus pneumoniae (strain ATCC 700669 / Spain 23F-1), this protein is Glycine--tRNA ligase alpha subunit.